Reading from the N-terminus, the 179-residue chain is ATP-dependent protease subunit HslV (179 aa).

Residue Thr5 is part of the active site. Cys164 and Thr167 together coordinate Na(+).

It belongs to the peptidase T1B family. HslV subfamily. As to quaternary structure, a double ring-shaped homohexamer of HslV is capped on each side by a ring-shaped HslU homohexamer. The assembly of the HslU/HslV complex is dependent on binding of ATP.

Its subcellular location is the cytoplasm. The enzyme catalyses ATP-dependent cleavage of peptide bonds with broad specificity.. Allosterically activated by HslU binding. In terms of biological role, protease subunit of a proteasome-like degradation complex believed to be a general protein degrading machinery. The chain is ATP-dependent protease subunit HslV from Carboxydothermus hydrogenoformans (strain ATCC BAA-161 / DSM 6008 / Z-2901).